The chain runs to 287 residues: Formamidopyrimidine-DNA glycosylase (287 aa).

Pro2 acts as the Schiff-base intermediate with DNA in catalysis. Glu3 serves as the catalytic Proton donor. Lys61 functions as the Proton donor; for beta-elimination activity in the catalytic mechanism. The DNA site is built by His95, Arg115, and Arg157. The FPG-type zinc-finger motif lies at Asn243–Pro277. Arg267 (proton donor; for delta-elimination activity) is an active-site residue.

It belongs to the FPG family. Monomer. Requires Zn(2+) as cofactor.

The catalysed reaction is Hydrolysis of DNA containing ring-opened 7-methylguanine residues, releasing 2,6-diamino-4-hydroxy-5-(N-methyl)formamidopyrimidine.. It carries out the reaction 2'-deoxyribonucleotide-(2'-deoxyribose 5'-phosphate)-2'-deoxyribonucleotide-DNA = a 3'-end 2'-deoxyribonucleotide-(2,3-dehydro-2,3-deoxyribose 5'-phosphate)-DNA + a 5'-end 5'-phospho-2'-deoxyribonucleoside-DNA + H(+). Functionally, involved in base excision repair of DNA damaged by oxidation or by mutagenic agents. Acts as a DNA glycosylase that recognizes and removes damaged bases. Has a preference for oxidized purines, such as 7,8-dihydro-8-oxoguanine (8-oxoG). Has AP (apurinic/apyrimidinic) lyase activity and introduces nicks in the DNA strand. Cleaves the DNA backbone by beta-delta elimination to generate a single-strand break at the site of the removed base with both 3'- and 5'-phosphates. This chain is Formamidopyrimidine-DNA glycosylase, found in Salinispora tropica (strain ATCC BAA-916 / DSM 44818 / JCM 13857 / NBRC 105044 / CNB-440).